Consider the following 443-residue polypeptide: Probable glycine dehydrogenase (decarboxylating) subunit 1 (443 aa).

It belongs to the GcvP family. N-terminal subunit subfamily. As to quaternary structure, the glycine cleavage system is composed of four proteins: P, T, L and H. In this organism, the P 'protein' is a heterodimer of two subunits.

It catalyses the reaction N(6)-[(R)-lipoyl]-L-lysyl-[glycine-cleavage complex H protein] + glycine + H(+) = N(6)-[(R)-S(8)-aminomethyldihydrolipoyl]-L-lysyl-[glycine-cleavage complex H protein] + CO2. In terms of biological role, the glycine cleavage system catalyzes the degradation of glycine. The P protein binds the alpha-amino group of glycine through its pyridoxal phosphate cofactor; CO(2) is released and the remaining methylamine moiety is then transferred to the lipoamide cofactor of the H protein. This is Probable glycine dehydrogenase (decarboxylating) subunit 1 from Nitratidesulfovibrio vulgaris (strain ATCC 29579 / DSM 644 / CCUG 34227 / NCIMB 8303 / VKM B-1760 / Hildenborough) (Desulfovibrio vulgaris).